Here is a 409-residue protein sequence, read N- to C-terminus: Na(+)/H(+) antiporter NhaA (409 aa).

The next 11 helical transmembrane spans lie at 13 to 33, 58 to 78, 93 to 113, 120 to 140, 153 to 173, 176 to 196, 216 to 236, 256 to 276, 279 to 299, 326 to 346, and 363 to 383; these read SGGILLMIATVAALLCQNTFL, LILWVNDGLMAVFFFLIGLEL, IALPAIGAAGGLIVPAVIFYL, FALGGWAIPTATDIAFALGIL, IFLMTLAIVDDLCAIVIIALF, SELSAQMLAVASVCLAALFAL, VAVLKSGVHATLAGVVAAFFI, LHGWVAFGVLPIFAFVNAGIS, GVGLDEILSPVALGTALGLFV, FIQLYGIAVLCGVGFTMSLFI, and LAILLGSVVSGAAGFILLKFS.

Belongs to the NhaA Na(+)/H(+) (TC 2.A.33) antiporter family.

The protein resides in the cell inner membrane. The enzyme catalyses Na(+)(in) + 2 H(+)(out) = Na(+)(out) + 2 H(+)(in). Its function is as follows. Na(+)/H(+) antiporter that extrudes sodium in exchange for external protons. The sequence is that of Na(+)/H(+) antiporter NhaA from Campylobacter concisus (strain 13826).